The sequence spans 171 residues: UPF0398 protein stu0232 (171 aa).

This sequence belongs to the UPF0398 family.

The chain is UPF0398 protein stu0232 from Streptococcus thermophilus (strain ATCC BAA-250 / LMG 18311).